Reading from the N-terminus, the 162-residue chain is Ribonuclease (162 aa).

An N-terminal signal peptide occupies residues 1–29; the sequence is MKKISSVFTMFALIAAILFSGFIPQQAYA. Positions 30–53 are excised as a propeptide; that stretch reads ETPLTQTATNETATIQLTSDVHTL. Catalysis depends on Glu125, which acts as the Proton acceptor. Residue His154 is the Proton donor of the active site.

Belongs to the ribonuclease N1/T1 family.

It localises to the secreted. This is a purine-specific ribonuclease. This is Ribonuclease from Bacillus intermedius.